The following is a 220-amino-acid chain: Phosphoenolpyruvate guanylyltransferase (220 aa).

3 residues coordinate phosphoenolpyruvate: T154, G169, and S172.

It belongs to the CofC family.

It catalyses the reaction phosphoenolpyruvate + GTP + H(+) = enolpyruvoyl-2-diphospho-5'-guanosine + diphosphate. It participates in cofactor biosynthesis; coenzyme F420 biosynthesis. Its function is as follows. Guanylyltransferase that catalyzes the activation of phosphoenolpyruvate (PEP) as enolpyruvoyl-2-diphospho-5'-guanosine, via the condensation of PEP with GTP. It is involved in the biosynthesis of coenzyme F420, a hydride carrier cofactor. The polypeptide is Phosphoenolpyruvate guanylyltransferase (Mycolicibacterium paratuberculosis (strain ATCC BAA-968 / K-10) (Mycobacterium paratuberculosis)).